We begin with the raw amino-acid sequence, 323 residues long: tRNA dimethylallyltransferase (323 aa).

12-19 contacts ATP; it reads GPTAAGKT. 14–19 provides a ligand contact to substrate; that stretch reads TAAGKT. Interaction with substrate tRNA stretches follow at residues 37-40 and 161-165; these read DSAL and QRLTR.

This sequence belongs to the IPP transferase family. As to quaternary structure, monomer. Mg(2+) serves as cofactor.

The enzyme catalyses adenosine(37) in tRNA + dimethylallyl diphosphate = N(6)-dimethylallyladenosine(37) in tRNA + diphosphate. Its function is as follows. Catalyzes the transfer of a dimethylallyl group onto the adenine at position 37 in tRNAs that read codons beginning with uridine, leading to the formation of N6-(dimethylallyl)adenosine (i(6)A). The protein is tRNA dimethylallyltransferase of Pseudomonas fluorescens (strain ATCC BAA-477 / NRRL B-23932 / Pf-5).